The following is a 3564-amino-acid chain: CUB and sushi domain-containing protein 1 (3564 aa).

An N-terminal signal peptide occupies residues 1–26 (MTAWRRFQSLLLLLGLLVLCARLLTA). Topologically, residues 27–3487 (AKGQNCGGLV…SHYHGTSSGS (3461 aa)) are extracellular. 10 disulfide bridges follow: Cys32/Cys58, Cys145/Cys185, Cys171/Cys202, Cys208/Cys234, Cys349/Cys389, Cys375/Cys406, Cys411/Cys437, Cys527/Cys567, Cys553/Cys580, and Cys584/Cys610. Residues 32–140 (CGGLVQGPNG…QGFKALYEVL (109 aa)) enclose the CUB 1 domain. Asn40 and Asn57 each carry an N-linked (GlcNAc...) asparagine glycan. In terms of domain architecture, Sushi 1 spans 143 to 204 (HTCGNPGEIL…WDFPAPFCRA (62 aa)). One can recognise a CUB 2 domain in the interval 208 to 312 (CGGTLRGTSS…KGFNAQFQVK (105 aa)). In terms of domain architecture, Sushi 2 spans 347–408 (DMCPDPGIPE…WSDHRPICRA (62 aa)). Residues 411-522 (CGSNLRGPSG…PGFKAVYQEI (112 aa)) enclose the CUB 3 domain. One can recognise a Sushi 3 domain in the interval 525–582 (GGCGDPGIPAYGKRTGSSFLHGDTLTFECPAAFELVGERVITCQQNNQWSGNKPSCVF). Positions 584–692 (CFFNFTASSG…RGFNITYTTF (109 aa)) constitute a CUB 4 domain. N-linked (GlcNAc...) asparagine glycans are attached at residues Asn587 and Asn686. Residues 695-756 (NECHDPGIPI…WSSTVPRCEA (62 aa)) form the Sushi 4 domain. 6 disulfide bridges follow: Cys697–Cys738, Cys723–Cys754, Cys758–Cys784, Cys873–Cys913, Cys899–Cys926, and Cys930–Cys956. The CUB 5 domain maps to 758-866 (CGGHLTASSG…IGFLIHYESV (109 aa)). The 58-residue stretch at 871–928 (DSCLDPGIPVNGHRHGGDFGIRSTVTFSCDPGYTLSDDEPLVCERNHQWNHALPSCDA) folds into the Sushi 5 domain. Residues 930-1040 (CGGYIQGKSG…EGFNITFSEY (111 aa)) enclose the CUB 6 domain. Residues Asn955, Asn1015, and Asn1034 are each glycosylated (N-linked (GlcNAc...) asparagine). The 60-residue stretch at 1043 to 1102 (EPCDDPGVPAFSRRIGFHFGVGDSLTFSCFLGYRLEGATKLTCLGGGRRVWSAPLPRCVA) folds into the Sushi 6 domain. 3 disulfide bridges follow: Cys1045-Cys1085, Cys1071-Cys1100, and Cys1104-Cys1130. Positions 1104–1212 (CGASVKGNEG…QGFQLTYTSF (109 aa)) constitute a CUB 7 domain. 2 N-linked (GlcNAc...) asparagine glycosylation sites follow: Asn1184 and Asn1197. The region spanning 1215-1275 (VKCEDPGIPN…WDKPLPSCIA (61 aa)) is the Sushi 7 domain. Disulfide bonds link Cys1217-Cys1258, Cys1244-Cys1273, Cys1277-Cys1304, Cys1391-Cys1431, Cys1417-Cys1447, Cys1451-Cys1477, Cys1564-Cys1604, Cys1590-Cys1621, Cys1625-Cys1651, Cys1741-Cys1781, Cys1767-Cys1798, and Cys1802-Cys1828. Positions 1277–1386 (CGGQIHAATS…SGFSIQFSTS (110 aa)) constitute a CUB 8 domain. The region spanning 1389-1449 (ATCNDPGMPQ…WQPDPPTCIA (61 aa)) is the Sushi 8 domain. N-linked (GlcNAc...) asparagine glycosylation is present at Asn1399. The CUB 9 domain occupies 1451–1559 (CGGNLTGPAG…SGFAIEFKEK (109 aa)). Residues Asn1454 and Asn1572 are each glycosylated (N-linked (GlcNAc...) asparagine). A Sushi 9 domain is found at 1562–1623 (EACFDPGNIM…WDQVLPSCNA (62 aa)). The 109-residue stretch at 1625-1733 (CGGQYTGSEG…RGFHFVYQAV (109 aa)) folds into the CUB 10 domain. N-linked (GlcNAc...) asparagine glycosylation occurs at Asn1644. In terms of domain architecture, Sushi 10 spans 1739 to 1800 (TQCSSVPEPR…WNDTIPSCVV (62 aa)). Residues Asn1792, Asn1805, and Asn1882 are each glycosylated (N-linked (GlcNAc...) asparagine). One can recognise a CUB 11 domain in the interval 1802 to 1910 (CSGNFTQRRG…AGFHLEYKTV (109 aa)). The region spanning 1913 to 1972 (AACQEPALPSNSIKIGDRYMVNDVLSFQCEPGYTLQGRSHISCMPGTVRRWNYPSPLCIA) is the Sushi 11 domain. 3 disulfide bridges follow: Cys1915–Cys1955, Cys1941–Cys1970, and Cys1974–Cys2000. One can recognise a CUB 12 domain in the interval 1974-2082 (CGGTLSTLGG…QGFKLAYQAY (109 aa)). N-linked (GlcNAc...) asparagine glycosylation is present at Asn2018. The 60-residue stretch at 2085–2144 (QNCPDPPPFQNGYMINSDYSVGQSVSFECYPGYILIGHPVLTCQHGINRNWNYPFPRCDA) folds into the Sushi 12 domain. Cystine bridges form between Cys2087-Cys2127, Cys2113-Cys2142, and Cys2146-Cys2172. The CUB 13 domain maps to 2146–2257 (CGYNVTSQNG…LNFHAFQLKK (112 aa)). N-linked (GlcNAc...) asparagine glycans are attached at residues Asn2149, Asn2154, and Asn2187. Positions 2256–2317 (KKCQPPPAVP…FEGSLPTCEA (62 aa)) constitute a Sushi 13 domain. Cystine bridges form between Cys2258–Cys2300, Cys2286–Cys2315, and Cys2319–Cys2347. A CUB 14 domain is found at 2319-2430 (CPANEVRTGS…KGFKIRYAAP (112 aa)). Residues Asn2358, Asn2394, Asn2400, Asn2445, Asn2470, and Asn2503 are each glycosylated (N-linked (GlcNAc...) asparagine). Sushi domains follow at residues 2430-2492 (PYCS…LCQA), 2493-2554 (VSCG…TCKP), 2555-2619 (VACP…SCRV), 2620-2677 (ISCG…RCLA), 2678-2735 (GHCG…VCVP), 2736-2793 (ITCG…TCRV), 2794-2856 (VNCS…KCLA), 2857-2914 (ISCG…HCTG), 2918-2975 (GFCG…VCEA), 2976-3034 (VSCG…DCTI), 3035-3094 (ISCG…VCKA), 3095-3152 (VLCP…QCLP), 3153-3210 (VFCG…TCID), 3214-3272 (NTCP…ECIP), and 3273-3332 (HACR…VCKS). Intrachain disulfides connect Cys2432-Cys2473, Cys2459-Cys2490, Cys2495-Cys2537, Cys2521-Cys2552, Cys2557-Cys2602, Cys2588-Cys2617, Cys2622-Cys2662, Cys2648-Cys2675, Cys2680-Cys2720, Cys2706-Cys2733, Cys2738-Cys2778, and Cys2764-Cys2791. An N-linked (GlcNAc...) asparagine glycan is attached at Asn2605. Residues Asn2750 and Asn2761 are each glycosylated (N-linked (GlcNAc...) asparagine). An N-linked (GlcNAc...) asparagine glycan is attached at Asn2795. Disulfide bonds link Cys2796/Cys2841, Cys2827/Cys2854, Cys2859/Cys2899, Cys2885/Cys2912, Cys2920/Cys2960, Cys2946/Cys2973, Cys2978/Cys3019, Cys3005/Cys3032, Cys3037/Cys3079, Cys3063/Cys3092, Cys3097/Cys3137, Cys3123/Cys3150, Cys3155/Cys3195, Cys3181/Cys3208, Cys3216/Cys3257, Cys3243/Cys3270, Cys3275/Cys3317, and Cys3302/Cys3330. The N-linked (GlcNAc...) asparagine glycan is linked to Asn2894. An N-linked (GlcNAc...) asparagine glycan is attached at Asn2963. N-linked (GlcNAc...) asparagine glycans are attached at residues Asn3022 and Asn3056. Asn3105 carries an N-linked (GlcNAc...) asparagine glycan. 2 N-linked (GlcNAc...) asparagine glycosylation sites follow: Asn3228 and Asn3260. 3 N-linked (GlcNAc...) asparagine glycosylation sites follow: Asn3339, Asn3379, and Asn3386. Residues 3488-3508 (VAAAILVPFFALILSGFAFYL) traverse the membrane as a helical segment. Residues 3509–3564 (YKHRTRPKVQYNGYAGHENSNGQASFENPMYDTNLKPTEAKAVRFDTTLNTVCTVV) are Cytoplasmic-facing.

This sequence belongs to the CSMD family. As to expression, weakly expressed in most tissues, except in brain. Expressed at intermediate level in brain, including cerebellum, substantia nigra, hippocampus and fetal brain.

The protein localises to the membrane. Its function is as follows. Potential suppressor of squamous cell carcinomas. The chain is CUB and sushi domain-containing protein 1 (CSMD1) from Homo sapiens (Human).